We begin with the raw amino-acid sequence, 33 residues long: GLWKTLKDSAKSAVTNVAVTMLDKLRCKLTGGC.

C27 and C33 are oxidised to a cystine.

As to expression, expressed by the skin glands.

The protein resides in the secreted. Functionally, antimicrobial peptide. In Pelophylax ridibundus (Marsh frog), this protein is Brevinin-2Rk.